Consider the following 319-residue polypeptide: Ficolin-2 (319 aa).

The first 22 residues, methionine 1–alanine 22, serve as a signal peptide directing secretion. Residues glycine 45 to serine 101 enclose the Collagen-like domain. The disordered stretch occupies residues leucine 53–threonine 106. The segment covering lysine 83 to aspartate 97 has biased composition (basic and acidic residues). The Fibrinogen C-terminal domain maps to glutamine 102–isoleucine 319. 2 disulfide bridges follow: cysteine 104/cysteine 132 and cysteine 111/cysteine 139. The Ca(2+) site is built by aspartate 255, aspartate 257, and serine 261. A disulfide bridge links cysteine 263 with cysteine 276. A glycan (N-linked (GlcNAc...) asparagine) is linked at asparagine 306.

The protein belongs to the ficolin lectin family. In terms of assembly, homotrimer. Interacts with elastin. Interacts with MASP1 and MASP2.

Its subcellular location is the secreted. Its function is as follows. May function in innate immunity through activation of the lectin complement pathway. Calcium-dependent and GlcNAc-binding lectin. The chain is Ficolin-2 (Fcn2) from Rattus norvegicus (Rat).